A 240-amino-acid chain; its full sequence is 3-deoxy-D-manno-octulosonic acid kinase (240 aa).

Residue aspartate 170 is part of the active site.

This sequence belongs to the protein kinase superfamily. KdkA/RfaP family.

It localises to the cell inner membrane. The catalysed reaction is an alpha-Kdo-(2-&gt;6)-lipid IVA + ATP = a 4-O-phospho-alpha-Kdo-(2-&gt;6)-lipid IVA + ADP + H(+). Its pathway is bacterial outer membrane biogenesis; LPS core biosynthesis. Functionally, catalyzes the ATP-dependent phosphorylation of the 3-deoxy-D-manno-octulosonic acid (Kdo) residue in Kdo-lipid IV(A) at the 4-OH position. The chain is 3-deoxy-D-manno-octulosonic acid kinase from Mannheimia succiniciproducens (strain KCTC 0769BP / MBEL55E).